The chain runs to 613 residues: Proline--tRNA ligase (613 aa).

This sequence belongs to the class-II aminoacyl-tRNA synthetase family. ProS type 1 subfamily. In terms of assembly, homodimer.

It localises to the cytoplasm. It carries out the reaction tRNA(Pro) + L-proline + ATP = L-prolyl-tRNA(Pro) + AMP + diphosphate. Catalyzes the attachment of proline to tRNA(Pro) in a two-step reaction: proline is first activated by ATP to form Pro-AMP and then transferred to the acceptor end of tRNA(Pro). As ProRS can inadvertently accommodate and process non-cognate amino acids such as alanine and cysteine, to avoid such errors it has two additional distinct editing activities against alanine. One activity is designated as 'pretransfer' editing and involves the tRNA(Pro)-independent hydrolysis of activated Ala-AMP. The other activity is designated 'posttransfer' editing and involves deacylation of mischarged Ala-tRNA(Pro). The misacylated Cys-tRNA(Pro) is not edited by ProRS. This chain is Proline--tRNA ligase, found in Cyanothece sp. (strain PCC 7425 / ATCC 29141).